Reading from the N-terminus, the 429-residue chain is MSNKLFRLDAGYQQYDWGKIGSSSAVAQFAAHSDPSVQIEQDKPYAELWMGTHSKMPSYNHESKESLRDIISKNPSAMLGKDIIDKFHATNELPFLFKVLSIEKVLSIQAHPDKALGKILHAQDPKNYPDDNHKPEMAIAVTDFEGFCGFKPLQEIADELKRIPELRNIVGEETSRNFIENIQPSAQKGSPEDEQNKKLLQAVFSRVMNASDDKIKIQARSLVERSKNSPSDFNKPDLPELIQRLNKQFPDDVGLFCGCLLLNHCRLNAGEAIFLRAKDPHAYISGDIMECMAASDNVVRAGFTPKFKDVKNLVSMLTYTYDPVEKQKMQPLKFDRSSGNGKSVLYNPPIEEFAVLETTFDEKLGQRHFEGVDGPSILITTKGNGYIKADGQKLKAEPGFVFFIAPHLPVDLEAEDEAFTTYRAFVEPN.

An N-acetylserine modification is found at Ser-2. The residue at position 107 (Ser-107) is a Phosphoserine. The Zn(2+) site is built by Gln-109, His-111, Glu-136, and His-281. Residue Arg-300 is part of the active site.

The protein belongs to the mannose-6-phosphate isomerase type 1 family. Monomer. Requires Zn(2+) as cofactor.

It is found in the cytoplasm. It catalyses the reaction D-mannose 6-phosphate = D-fructose 6-phosphate. It functions in the pathway nucleotide-sugar biosynthesis; GDP-alpha-D-mannose biosynthesis; alpha-D-mannose 1-phosphate from D-fructose 6-phosphate: step 1/2. Its activity is regulated as follows. Can be inhibited by an excess of zinc. In terms of biological role, involved in the synthesis of the GDP-mannose and dolichol-phosphate-mannose required for a number of critical mannosyl transfer reactions. The protein is Mannose-6-phosphate isomerase (PMI40) of Saccharomyces cerevisiae (strain ATCC 204508 / S288c) (Baker's yeast).